We begin with the raw amino-acid sequence, 119 residues long: Lamprin 1.8-10 (119 aa).

An N-terminal signal peptide occupies residues Met1 to Ala19. 7 tandem repeats follow at residues Gly41 to Tyr45, Gly46 to Tyr50, Gly51 to Tyr55, Gly56 to Val60, Ala61 to Tyr65, Gly66 to Tyr70, and Gly86 to Tyr90. The segment at Gly41–Tyr90 is 7 X 5 AA approximate repeats.

In terms of assembly, the polymeric lamprin chains self-aggregate to form fibers and have secondary structures particularly rich in beta-sheets and in beta-turns.

Its subcellular location is the secreted. It localises to the extracellular space. The protein localises to the extracellular matrix. Its function is as follows. Self-aggregating protein that is part of the soluble form of lamprin. This chain is Lamprin 1.8-10, found in Petromyzon marinus (Sea lamprey).